Consider the following 558-residue polypeptide: SPATS2-like protein (558 aa).

A2 is subject to N-acetylalanine. Residues 63 to 79 are compositionally biased toward basic residues; sequence GKKKNNKRKRSKSKQHQ. Disordered regions lie at residues 63–148 and 161–202; these read GKKK…RGIT and DGNP…SNAP. 2 stretches are compositionally biased toward basic and acidic residues: residues 80–92 and 110–142; these read GNKDAKDKGERPE and GCEKDSSSPDSAREKLALTPREKKISILEEPPR. A Phosphoserine modification is found at S120. A coiled-coil region spans residues 279-344; sequence KEEAMDILTA…ARFSCDIEQL (66 aa). A disordered region spans residues 383–514; the sequence is KQGNFSRKSS…SEKARRRQHA (132 aa). Polar residues predominate over residues 416–433; sequence DACQQTMPTNKQQNGPSN. Phosphoserine is present on S455. Over residues 469-485 the composition is skewed to basic residues; sequence HEHRRQPHNGFRPKNKG.

It belongs to the SPATS2 family.

The protein localises to the cytoplasm. The protein resides in the nucleus. Its subcellular location is the nucleolus. The sequence is that of SPATS2-like protein (Spats2l) from Rattus norvegicus (Rat).